Here is a 367-residue protein sequence, read N- to C-terminus: Cytochrome b (367 aa).

The next 4 helical transmembrane spans lie at 33–53 (FGSL…FLAM), 77–98 (WVLR…YLHI), 113–133 (WNMG…GYVL), and 178–198 (FFAF…VHLL). Histidine 83 and histidine 97 together coordinate heme b. The heme b site is built by histidine 182 and histidine 196. A ubiquinone is bound at residue histidine 201. 4 helical membrane-spanning segments follow: residues 226-246 (IKDI…VLFS), 288-308 (LGGV…PFLH), 320-340 (FSQC…WIGG), and 347-367 (YIII…VIMP).

This sequence belongs to the cytochrome b family. In terms of assembly, the cytochrome bc1 complex contains 11 subunits: 3 respiratory subunits (MT-CYB, CYC1 and UQCRFS1), 2 core proteins (UQCRC1 and UQCRC2) and 6 low-molecular weight proteins (UQCRH/QCR6, UQCRB/QCR7, UQCRQ/QCR8, UQCR10/QCR9, UQCR11/QCR10 and a cleavage product of UQCRFS1). This cytochrome bc1 complex then forms a dimer. Requires heme b as cofactor.

Its subcellular location is the mitochondrion inner membrane. Component of the ubiquinol-cytochrome c reductase complex (complex III or cytochrome b-c1 complex) that is part of the mitochondrial respiratory chain. The b-c1 complex mediates electron transfer from ubiquinol to cytochrome c. Contributes to the generation of a proton gradient across the mitochondrial membrane that is then used for ATP synthesis. This Hypsugo savii (Savi's pipistrelle) protein is Cytochrome b (MT-CYB).